The following is a 295-amino-acid chain: sn-glycerol-3-phosphate transport system permease protein UgpA (295 aa).

Topologically, residues 1 to 11 are cytoplasmic; sequence MSSSRPVFRSR. A helical transmembrane segment spans residues 12–32; the sequence is WLPYLLVAPQLIITVIFFIWP. The Periplasmic portion of the chain corresponds to 33–80; sequence AGEALWYSLQSVDPFGFSSQFVGLDNFVALFHDSYYIDSFWTTIKFST. In terms of domain architecture, ABC transmembrane type-1 spans 76-284; that stretch reads IKFSTFVTVS…FLVIVLTVVQ (209 aa). The chain crosses the membrane as a helical span at residues 81-101; sequence FVTVSGLLVSLFFAALVEYIV. Residues 102-109 lie on the Cytoplasmic side of the membrane; that stretch reads RGSRFYQT. Residues 110–130 form a helical membrane-spanning segment; that stretch reads LMLLPYAVAPAVAAVLWIFLF. Topologically, residues 131–156 are periplasmic; the sequence is NPGRGLITHFLAEFGYDWNHAQNSGQ. Residues 157–177 form a helical membrane-spanning segment; that stretch reads AMFLVVFASVWKQISYNFLFF. Topologically, residues 178–207 are cytoplasmic; that stretch reads YAALQSIPRSLIEAAAIDGVGPIRRFFKIA. Residues 208–228 form a helical membrane-spanning segment; sequence LPLIAPVSFFLLVVNLVYAFF. At 229-262 the chain is on the periplasmic side; the sequence is DTFPVIDAATSGGPVQAITTLIYKIYREGFTGLD. The chain crosses the membrane as a helical span at residues 263 to 283; that stretch reads LASSAAQSVVLMFLVIVLTVV. The Cytoplasmic segment spans residues 284-295; the sequence is QFRYVESKVRYQ.

This sequence belongs to the binding-protein-dependent transport system permease family. UgpAE subfamily. The complex is composed of two ATP-binding proteins (UgpC), two transmembrane proteins (UgpA and UgpE) and a solute-binding protein (UgpB).

The protein localises to the cell inner membrane. Part of the ABC transporter complex UgpBAEC involved in sn-glycerol-3-phosphate (G3P) import. Probably responsible for the translocation of the substrate across the membrane. This is sn-glycerol-3-phosphate transport system permease protein UgpA (ugpA) from Shigella dysenteriae serotype 1 (strain Sd197).